Here is a 457-residue protein sequence, read N- to C-terminus: Siroheme synthase (457 aa).

Residues 1–204 are precorrin-2 dehydrogenase /sirohydrochlorin ferrochelatase; that stretch reads MDHLPIFCQL…QDQQAVEETT (204 aa). Residues 22–23 and 43–44 each bind NAD(+); these read DV and LA. Ser128 bears the Phosphoserine mark. The tract at residues 216 to 457 is uroporphyrinogen-III C-methyltransferase; the sequence is GEVVLVGAGP…REKLNWFSNH (242 aa). Position 225 (Pro225) interacts with S-adenosyl-L-methionine. The active-site Proton acceptor is Asp248. Residue Lys270 is the Proton donor of the active site. S-adenosyl-L-methionine is bound by residues 301-303, Ile306, 331-332, Met382, and Gly411; these read GGD and TA.

It in the N-terminal section; belongs to the precorrin-2 dehydrogenase / sirohydrochlorin ferrochelatase family. This sequence in the C-terminal section; belongs to the precorrin methyltransferase family.

The enzyme catalyses uroporphyrinogen III + 2 S-adenosyl-L-methionine = precorrin-2 + 2 S-adenosyl-L-homocysteine + H(+). The catalysed reaction is precorrin-2 + NAD(+) = sirohydrochlorin + NADH + 2 H(+). It catalyses the reaction siroheme + 2 H(+) = sirohydrochlorin + Fe(2+). Its pathway is cofactor biosynthesis; adenosylcobalamin biosynthesis; precorrin-2 from uroporphyrinogen III: step 1/1. It functions in the pathway cofactor biosynthesis; adenosylcobalamin biosynthesis; sirohydrochlorin from precorrin-2: step 1/1. The protein operates within porphyrin-containing compound metabolism; siroheme biosynthesis; precorrin-2 from uroporphyrinogen III: step 1/1. It participates in porphyrin-containing compound metabolism; siroheme biosynthesis; siroheme from sirohydrochlorin: step 1/1. Its pathway is porphyrin-containing compound metabolism; siroheme biosynthesis; sirohydrochlorin from precorrin-2: step 1/1. Multifunctional enzyme that catalyzes the SAM-dependent methylations of uroporphyrinogen III at position C-2 and C-7 to form precorrin-2 via precorrin-1. Then it catalyzes the NAD-dependent ring dehydrogenation of precorrin-2 to yield sirohydrochlorin. Finally, it catalyzes the ferrochelation of sirohydrochlorin to yield siroheme. The protein is Siroheme synthase of Enterobacter sp. (strain 638).